Consider the following 760-residue polypeptide: Armadillo-like helical domain-containing protein 4 (760 aa).

A signal peptide spans 1-27 (MSRPIVLHICLAFCSLLLLNFAAQCLA). The Extracellular portion of the chain corresponds to 28–700 (FPNLERREIV…KDKAGYMSGM (673 aa)). Disordered stretches follow at residues 49 to 69 (LNTDDLENDSVTSNTPVSGDP), 117 to 143 (GEEVFGSSQPERMSPESRPSKATLTNP), 216 to 243 (RTEKFEANPEHKTTSFPGSKLTAGTEPS), 373 to 392 (HGGERASDQSSVTPTSPMGD), 474 to 495 (TRGEDETKGGRELPSATVDAPR), and 536 to 652 (NEEL…SQEP). N56 is a glycosylation site (N-linked (GlcNAc...) asparagine). The span at 216-228 (RTEKFEANPEHKT) shows a compositional bias: basic and acidic residues. Polar residues predominate over residues 380–390 (DQSSVTPTSPM). Basic and acidic residues predominate over residues 474–484 (TRGEDETKGGR). Acidic residues predominate over residues 594–635 (LESEEGEDDEDEEDEEEEDEEEEDEEEDEEDKDADSLDEALG). Residues 701 to 721 (LVPVGVGIAGALFILGALYSI) form a helical membrane-spanning segment. Over 722-760 (KVMNRRRRNGFKRHKRKQREFNSMQDRVMLLADSSEDEF) the chain is Cytoplasmic. A phosphoserine mark is found at S755 and S756.

Interacts with IL6ST; this interaction prevents IL6ST protein homodimerization and bridges ARMH4 with IL6R and STAT3 and therefore inhibits phosphorylation of STAT3 at 'Tyr-705'. Interacts (via cytoplasmic tail) with RICTOR; this interaction bridges ARMH4 to the mTORC2 complex and inhibits the mTORC2 kinase activity.

It is found in the membrane. Its function is as follows. May modulate immune response and may play a role in inflammation. Down-modulates STAT3 signaling throught direct interaction with IL6ST, resulting in the inhibition of phosphorylation of STAT3 at Tyr-705. May negatively regulates AKT signaling by modulating the activity of mTORC2 complex through RICTOR interaction. The chain is Armadillo-like helical domain-containing protein 4 from Bos taurus (Bovine).